Reading from the N-terminus, the 380-residue chain is L-lactate dehydrogenase (380 aa).

Residues 1–380 (MIISSTTDFR…DRSILAKTDR (380 aa)) enclose the FMN hydroxy acid dehydrogenase domain. Tyr24 is a substrate binding site. FMN-binding residues include Ser106 and Gln127. Residue Tyr129 coordinates substrate. An FMN-binding site is contributed by Thr155. Arg164 contributes to the substrate binding site. Lys251 is an FMN binding site. The Proton acceptor role is filled by His275. Arg278 is a substrate binding site. 306-330 (DGGVRSGLDVVRMLALGAKGVLLGR) provides a ligand contact to FMN.

Belongs to the FMN-dependent alpha-hydroxy acid dehydrogenase family. FMN is required as a cofactor.

The protein resides in the cell inner membrane. The enzyme catalyses (S)-lactate + A = pyruvate + AH2. In terms of biological role, catalyzes the conversion of L-lactate to pyruvate. Is coupled to the respiratory chain. This is L-lactate dehydrogenase from Caulobacter sp. (strain K31).